Consider the following 1145-residue polypeptide: Protein STU1 (1145 aa).

HEAT repeat units lie at residues 96–134 (TLPL…EKYV) and 168–206 (YVPV…KSDL). Disordered regions lie at residues 226 to 271 (ELIP…GIDT), 510 to 793 (LLNK…VVDP), and 816 to 839 (PEPV…PAAS). The segment covering 229 to 239 (PTSSRPETPAA) has biased composition (low complexity). The segment covering 535 to 545 (SKSTMGTSKPS) has biased composition (polar residues). Low complexity-rich tracts occupy residues 580–594 (TTTT…SGAR), 663–676 (ASHA…SPSS), and 696–708 (QSQS…SSPS).

The protein belongs to the CLASP family. Interacts with microtubules.

It localises to the cytoplasm. The protein resides in the cytoskeleton. The protein localises to the nucleus. Its subcellular location is the spindle. Its function is as follows. Microtubule binding protein that promotes the stabilization of dynamic microtubules. Required for mitotic spindle formation. The protein is Protein STU1 (STU1) of Gibberella zeae (strain ATCC MYA-4620 / CBS 123657 / FGSC 9075 / NRRL 31084 / PH-1) (Wheat head blight fungus).